The sequence spans 533 residues: Probable nucleolar protein 5-1 (533 aa).

The region spanning 280-398 (IAPNLTALVG…LEARLRTLEG (119 aa)) is the Nop domain. The segment at 402–533 (GRLSGSAKGK…EKKKKKKTEV (132 aa)) is disordered. Basic and acidic residues predominate over residues 412–423 (PKIEVYDKDKKK). Residues 433-450 (KTYNTAADSLLQTPTVDS) show a composition bias toward polar residues. 2 stretches are compositionally biased toward basic and acidic residues: residues 474–489 (TEEP…KTEA) and 515–524 (MPAKKKEKSE).

This sequence belongs to the NOP5/NOP56 family.

It is found in the nucleus. The protein resides in the nucleolus. Required for 60S ribosomal subunit biogenesis. In Arabidopsis thaliana (Mouse-ear cress), this protein is Probable nucleolar protein 5-1 (NOP5-1).